The primary structure comprises 190 residues: MIGSLTGIIEEIYNNYIILNVGNVGYIIYVSHKVLQSCKTGNNIKLYIETYVNRDNLTQLYGFLDKQEQDYMRMLVTINGINHKTAISILSKLSPEQIFSAVVSNNKNAFRGNGIGEKLAGRITTELQYKISKMPIEETLIIKEDDSLAALISLGYDKLKAFNAIQEIKANFPDDSIQEIIRKALQKLSQ.

Residues 1–64 (MIGSLTGIIE…DNLTQLYGFL (64 aa)) form a domain I region. A domain II region spans residues 65–142 (DKQEQDYMRM…KMPIEETLII (78 aa)). K143 is a region of interest (flexible linker). Residues 143–190 (KEDDSLAALISLGYDKLKAFNAIQEIKANFPDDSIQEIIRKALQKLSQ) are domain III.

The protein belongs to the RuvA family. As to quaternary structure, homotetramer. Forms an RuvA(8)-RuvB(12)-Holliday junction (HJ) complex. HJ DNA is sandwiched between 2 RuvA tetramers; dsDNA enters through RuvA and exits via RuvB. An RuvB hexamer assembles on each DNA strand where it exits the tetramer. Each RuvB hexamer is contacted by two RuvA subunits (via domain III) on 2 adjacent RuvB subunits; this complex drives branch migration. In the full resolvosome a probable DNA-RuvA(4)-RuvB(12)-RuvC(2) complex forms which resolves the HJ.

It localises to the cytoplasm. Functionally, the RuvA-RuvB-RuvC complex processes Holliday junction (HJ) DNA during genetic recombination and DNA repair, while the RuvA-RuvB complex plays an important role in the rescue of blocked DNA replication forks via replication fork reversal (RFR). RuvA specifically binds to HJ cruciform DNA, conferring on it an open structure. The RuvB hexamer acts as an ATP-dependent pump, pulling dsDNA into and through the RuvAB complex. HJ branch migration allows RuvC to scan DNA until it finds its consensus sequence, where it cleaves and resolves the cruciform DNA. This is Holliday junction branch migration complex subunit RuvA from Ehrlichia chaffeensis (strain ATCC CRL-10679 / Arkansas).